The chain runs to 190 residues: Large ribosomal subunit protein uL10 (190 aa).

It belongs to the universal ribosomal protein uL10 family. In terms of assembly, part of the ribosomal stalk of the 50S ribosomal subunit. The N-terminus interacts with L11 and the large rRNA to form the base of the stalk. The C-terminus forms an elongated spine to which L12 dimers bind in a sequential fashion forming a multimeric L10(L12)X complex.

Forms part of the ribosomal stalk, playing a central role in the interaction of the ribosome with GTP-bound translation factors. In Trichodesmium erythraeum (strain IMS101), this protein is Large ribosomal subunit protein uL10.